A 370-amino-acid polypeptide reads, in one-letter code: Anhydro-N-acetylmuramic acid kinase (370 aa).

12–19 (GTSLDGVD) contributes to the ATP binding site.

Belongs to the anhydro-N-acetylmuramic acid kinase family.

The enzyme catalyses 1,6-anhydro-N-acetyl-beta-muramate + ATP + H2O = N-acetyl-D-muramate 6-phosphate + ADP + H(+). The protein operates within amino-sugar metabolism; 1,6-anhydro-N-acetylmuramate degradation. It participates in cell wall biogenesis; peptidoglycan recycling. Its function is as follows. Catalyzes the specific phosphorylation of 1,6-anhydro-N-acetylmuramic acid (anhMurNAc) with the simultaneous cleavage of the 1,6-anhydro ring, generating MurNAc-6-P. Is required for the utilization of anhMurNAc either imported from the medium or derived from its own cell wall murein, and thus plays a role in cell wall recycling. This Yersinia pseudotuberculosis serotype O:1b (strain IP 31758) protein is Anhydro-N-acetylmuramic acid kinase.